Here is a 122-residue protein sequence, read N- to C-terminus: MGKTSQKTITRLKRQVRVRKKVTGTAERPRLNVFRSANHIYAQLIDDVQGVTLAAASTCTEGVAQSGVHTGNKASAAAVGAAIARVALQKDIRSVVFDRNGFLYHGRIQALADAAREAGLDF.

Belongs to the universal ribosomal protein uL18 family. In terms of assembly, part of the 50S ribosomal subunit; part of the 5S rRNA/L5/L18/L25 subcomplex. Contacts the 5S and 23S rRNAs.

Its function is as follows. This is one of the proteins that bind and probably mediate the attachment of the 5S RNA into the large ribosomal subunit, where it forms part of the central protuberance. This is Large ribosomal subunit protein uL18 from Trichlorobacter lovleyi (strain ATCC BAA-1151 / DSM 17278 / SZ) (Geobacter lovleyi).